Consider the following 345-residue polypeptide: Glycerol-3-phosphate dehydrogenase [NAD(P)+] (345 aa).

Residues S23, Y24, H44, and K118 each contribute to the NADPH site. Sn-glycerol 3-phosphate contacts are provided by K118, G147, and T149. A151 serves as a coordination point for NADPH. Sn-glycerol 3-phosphate-binding residues include K203, D256, S266, R267, and N268. Catalysis depends on K203, which acts as the Proton acceptor. R267 contacts NADPH. Positions 291 and 293 each coordinate NADPH.

The protein belongs to the NAD-dependent glycerol-3-phosphate dehydrogenase family.

It localises to the cytoplasm. It carries out the reaction sn-glycerol 3-phosphate + NAD(+) = dihydroxyacetone phosphate + NADH + H(+). The catalysed reaction is sn-glycerol 3-phosphate + NADP(+) = dihydroxyacetone phosphate + NADPH + H(+). It functions in the pathway membrane lipid metabolism; glycerophospholipid metabolism. In terms of biological role, catalyzes the reduction of the glycolytic intermediate dihydroxyacetone phosphate (DHAP) to sn-glycerol 3-phosphate (G3P), the key precursor for phospholipid synthesis. The sequence is that of Glycerol-3-phosphate dehydrogenase [NAD(P)+] from Vibrio parahaemolyticus serotype O3:K6 (strain RIMD 2210633).